Consider the following 226-residue polypeptide: UPF0173 metal-dependent hydrolase CTN_1413 (226 aa).

This sequence belongs to the UPF0173 family.

The protein is UPF0173 metal-dependent hydrolase CTN_1413 of Thermotoga neapolitana (strain ATCC 49049 / DSM 4359 / NBRC 107923 / NS-E).